Here is a 325-residue protein sequence, read N- to C-terminus: Protein ORANGE-ORANGE, chloroplastic (325 aa).

The N-terminal 54 residues, 1 to 54 (MDRVLVASYPINHLIRPHSFRIDYCWSTCFTSRLNSGKERQKLSSRWRWRSMAS), are a transit peptide targeting the chloroplast. Low complexity predominate over residues 53–71 (ASDSTDSSSSSSFAPSVES). The disordered stretch occupies residues 53–77 (ASDSTDSSSSSSFAPSVESDPSDKT). The next 2 helical transmembrane spans lie at 164–184 (LYYV…GLLA) and 217–237 (IVAS…VVEV). Residues 226–317 (VGVISALMVV…CTGMAMASEH (92 aa)) are CR-type-like. The stretch at 248-255 (CKYCLGTG) is one CXXCXGXG motif repeat. One copy of the CXXCXXXG motif repeat lies at 259 to 266 (CARCSNTG). Residues 292–299 (CQNCSGSG) form a CXXCXGXG motif repeat. Residues 303-310 (CPTCLCTG) form a CXXCXXXG motif repeat.

The protein belongs to the orange-like family.

Its subcellular location is the plastid. The protein resides in the chloroplast membrane. Functionally, triggers accumulation of carotenoids, mainly beta-carotene, in fruit flesh. The chain is Protein ORANGE-ORANGE, chloroplastic from Cucumis melo (Muskmelon).